Consider the following 215-residue polypeptide: Probable transaldolase (215 aa).

Catalysis depends on Lys-83, which acts as the Schiff-base intermediate with substrate.

Belongs to the transaldolase family. Type 3B subfamily.

Its subcellular location is the cytoplasm. It catalyses the reaction D-sedoheptulose 7-phosphate + D-glyceraldehyde 3-phosphate = D-erythrose 4-phosphate + beta-D-fructose 6-phosphate. The protein operates within carbohydrate degradation; pentose phosphate pathway; D-glyceraldehyde 3-phosphate and beta-D-fructose 6-phosphate from D-ribose 5-phosphate and D-xylulose 5-phosphate (non-oxidative stage): step 2/3. In terms of biological role, transaldolase is important for the balance of metabolites in the pentose-phosphate pathway. This chain is Probable transaldolase (tal), found in Clostridium acetobutylicum (strain ATCC 824 / DSM 792 / JCM 1419 / IAM 19013 / LMG 5710 / NBRC 13948 / NRRL B-527 / VKM B-1787 / 2291 / W).